Reading from the N-terminus, the 272-residue chain is Eukaryotic translation initiation factor 3 subunit G (272 aa).

Disordered regions lie at residues 1–28 and 143–187; these read MPALDEIKSSWADEVELDSGSLPPPTEI and AGKA…RGRD. The RRM domain maps to 190 to 268; sequence TAIRISNLSE…LILNVEWSKP (79 aa).

Belongs to the eIF-3 subunit G family. As to quaternary structure, component of the eukaryotic translation initiation factor 3 (eIF-3) complex.

The protein localises to the cytoplasm. Its function is as follows. RNA-binding component of the eukaryotic translation initiation factor 3 (eIF-3) complex, which is involved in protein synthesis of a specialized repertoire of mRNAs and, together with other initiation factors, stimulates binding of mRNA and methionyl-tRNAi to the 40S ribosome. The eIF-3 complex specifically targets and initiates translation of a subset of mRNAs involved in cell proliferation. This subunit can bind 18S rRNA. The protein is Eukaryotic translation initiation factor 3 subunit G of Culex quinquefasciatus (Southern house mosquito).